The primary structure comprises 269 residues: Tryptophan synthase alpha chain (269 aa).

Active-site proton acceptor residues include Glu49 and Asp60.

This sequence belongs to the TrpA family. Tetramer of two alpha and two beta chains.

The catalysed reaction is (1S,2R)-1-C-(indol-3-yl)glycerol 3-phosphate + L-serine = D-glyceraldehyde 3-phosphate + L-tryptophan + H2O. It participates in amino-acid biosynthesis; L-tryptophan biosynthesis; L-tryptophan from chorismate: step 5/5. Its function is as follows. The alpha subunit is responsible for the aldol cleavage of indoleglycerol phosphate to indole and glyceraldehyde 3-phosphate. The polypeptide is Tryptophan synthase alpha chain (Cronobacter sakazakii (strain ATCC BAA-894) (Enterobacter sakazakii)).